A 529-amino-acid chain; its full sequence is MSSGLIYISLEVLVACLITALIMYYVMKKIYYARGQAILKGASAKAKLMEFQAKSFVEAEEMRMKSQECKLQQQYENKNLQLQTHFDKKEAHLKHLEAQHKEFVRDEKRYLEKEKKELEKERQILEQERENFKKQRAICKEAQAKALDAMLNYMAYTKDEIKSMILEQLEEELEAQKSALIRRYEKEAKEEGKKKSYAILAEATARFAGDYATENLTSRIALPCSDYVGRVIGKDGKNIEAFKKISGVDIEFSEDSSELCLSSFNIYRREVASETIKILIEDGRIQPNRIEEVYHRVARNMEKELLSEGESVVLELELGTMEDELKILIGKMRYRFSFGQNALQHSKEVALLAGLIAEQLGGDKKLARRAGILHDIGKALTQELGRDHVNLGVEVCKRHKEDPVVINAIYAHHGHEEIMSVECASVCAADALSAGRPGARRKSDEEYAKRMQALEEIALEFDGVEKAYAMESGRELRVIVKSNQVRDNQVPIIARKIAKRIEESTQYVGEVGVQVVRENRFKTTATLKQ.

Residues 4-24 (GLIYISLEVLVACLITALIMY) traverse the membrane as a helical segment. The 82-residue stretch at 216–297 (LTSRIALPCS…NRIEEVYHRV (82 aa)) folds into the KH domain. The 94-residue stretch at 342-435 (ALQHSKEVAL…VCAADALSAG (94 aa)) folds into the HD domain.

The protein belongs to the RNase Y family.

The protein localises to the cell membrane. Functionally, endoribonuclease that initiates mRNA decay. The polypeptide is Ribonuclease Y (Helicobacter pylori (strain J99 / ATCC 700824) (Campylobacter pylori J99)).